A 952-amino-acid chain; its full sequence is Meiosis-specific coiled-coil domain-containing protein MEIOC (952 aa).

3 disordered regions span residues 1-23, 609-629, and 933-952; these read MEVR…EGLE, QAKP…LDGL, and VHES…TNKH. A compositionally biased stretch (basic and acidic residues) spans 617-627; that stretch reads YDPEEGPKHLD. Residues 936–952 are compositionally biased toward polar residues; the sequence is SINSSNPMNQRGETNKH.

As to quaternary structure, interacts with YTHDC2; binds transcript that regulate the mitotic cell cycle inhibiting progression into metaphase, thereby allowing meiotic prophase to proceed normally. Interacts with RBM46. As to expression, expressed in fetal ovaries. Expressed in testis.

The protein resides in the cytoplasm. Its subcellular location is the nucleus. In terms of biological role, is required for meiosis completion in both male and female germ cells. Confers stability to numerous meiotic mRNAs in gonads allowing proper initiation and progression into meiosis prophase I. The function may involve YTHDC2 and is independent of induction by retinoic acid (RA). Maintains an extended meiotic prophase I by properly promoting the transition from a mitotic to a meiotic cell cycle program by binding transcripts through its interaction with YTHDC2 that regulate the mitotic cell cycle. This is Meiosis-specific coiled-coil domain-containing protein MEIOC from Homo sapiens (Human).